Reading from the N-terminus, the 90-residue chain is Probable Fe(2+)-trafficking protein (90 aa).

This sequence belongs to the Fe(2+)-trafficking protein family.

Functionally, could be a mediator in iron transactions between iron acquisition and iron-requiring processes, such as synthesis and/or repair of Fe-S clusters in biosynthetic enzymes. The protein is Probable Fe(2+)-trafficking protein of Pseudomonas putida (strain W619).